Here is a 330-residue protein sequence, read N- to C-terminus: RNA/RNP complex-1-interacting phosphatase (330 aa).

Residues 1–12 (MSQWHHPRSGWG) are compositionally biased toward basic residues. The tract at residues 1-32 (MSQWHHPRSGWGRRRDFSGRSSAKKKGGNHIP) is disordered. Positions 61-208 (FEKKLAPEEC…LQNGPIRKNW (148 aa)) constitute a Tyrosine-protein phosphatase domain. The active-site Phosphocysteine intermediate is the cysteine 152. Position 153-158 (153-158 (THGLNR)) interacts with substrate. The active-site Proton donor/acceptor is arginine 158.

The protein belongs to the protein-tyrosine phosphatase family. Non-receptor class dual specificity subfamily. In terms of assembly, monomer. May interact with SFRS7 and SFRS9/SRP30C.

The protein resides in the nucleus. It localises to the nucleus speckle. In terms of biological role, possesses RNA 5'-triphosphatase and diphosphatase activities, but displays a poor protein-tyrosine phosphatase activity. In addition, has phosphatase activity with ATP, ADP and O-methylfluorescein phosphate (in vitro). Binds to RNA. May participate in nuclear mRNA metabolism. In Homo sapiens (Human), this protein is RNA/RNP complex-1-interacting phosphatase.